We begin with the raw amino-acid sequence, 363 residues long: Chorismate synthase (363 aa).

The NADP(+) site is built by Arg-48 and Arg-54. Residues 125–127 (RSS), 237–238 (NA), Gly-277, 292–296 (KPTSS), and Arg-318 each bind FMN.

Belongs to the chorismate synthase family. As to quaternary structure, homotetramer. FMNH2 is required as a cofactor.

The catalysed reaction is 5-O-(1-carboxyvinyl)-3-phosphoshikimate = chorismate + phosphate. The protein operates within metabolic intermediate biosynthesis; chorismate biosynthesis; chorismate from D-erythrose 4-phosphate and phosphoenolpyruvate: step 7/7. In terms of biological role, catalyzes the anti-1,4-elimination of the C-3 phosphate and the C-6 proR hydrogen from 5-enolpyruvylshikimate-3-phosphate (EPSP) to yield chorismate, which is the branch point compound that serves as the starting substrate for the three terminal pathways of aromatic amino acid biosynthesis. This reaction introduces a second double bond into the aromatic ring system. This is Chorismate synthase from Pseudomonas savastanoi pv. phaseolicola (strain 1448A / Race 6) (Pseudomonas syringae pv. phaseolicola (strain 1448A / Race 6)).